Consider the following 763-residue polypeptide: Ethylene receptor 2 (763 aa).

Transmembrane regions (helical) follow at residues 58–78 (FLIA…ATCS), 86–106 (IVLQ…ITMF), and 115–135 (VVLA…ATAI). Positions 97 and 101 each coordinate Cu cation. The region spanning 190-339 (DRHTILYTTM…VVADQVAVAL (150 aa)) is the GAF domain. The Histidine kinase domain occupies 382-615 (AMYDGMRRPM…TIMLALQFQL (234 aa)). A Response regulatory domain is found at 641–760 (QVILVDSDDT…ALGDELYRVL (120 aa)). D692 bears the 4-aspartylphosphate mark.

The protein belongs to the ethylene receptor family. The cofactor is Cu cation. Expressed in anthers and hulls.

Its subcellular location is the endoplasmic reticulum membrane. The enzyme catalyses ATP + protein L-histidine = ADP + protein N-phospho-L-histidine.. Functionally, ethylene receptor related to bacterial two-component regulators. Acts as a negative regulator of ethylene signaling. May delay the transition from the vegetative stage to the floral stage by up-regulating GI (GIGANTEA) and RCN1 and cause starch accumulation in stems by down-regulating the alpha-amylase AMY3D. This Oryza sativa subsp. indica (Rice) protein is Ethylene receptor 2.